The primary structure comprises 83 residues: Small ribosomal subunit protein uS17c (83 aa).

This sequence belongs to the universal ribosomal protein uS17 family. Part of the 30S ribosomal subunit.

Its subcellular location is the plastid. It is found in the chloroplast. In terms of biological role, one of the primary rRNA binding proteins, it binds specifically to the 5'-end of 16S ribosomal RNA. This is Small ribosomal subunit protein uS17c (rps17) from Pyropia yezoensis (Susabi-nori).